The chain runs to 390 residues: 3,5-dihydroxybiphenyl synthase (390 aa).

Residue Cys-161 is part of the active site.

It belongs to the thiolase-like superfamily. Chalcone/stilbene synthases family. Homodimer.

It carries out the reaction benzoyl-CoA + 3 malonyl-CoA + 3 H(+) = biphenyl-3,5-diol + 4 CO2 + 4 CoA. Its function is as follows. Type III polyketide synthase involved in the biosynthesis of the phytoalexins bisphenyls and dibenzofurans. Can also use salicoyl-CoA and malonyl-CoA to produce a diketide intermediate yielding 4-hydroxycoumarin after cyclization and enolization. Can also use m-hydroxybenzoyl-CoA as substrate, producing m-hydroxybenzoyl diacetic acid lactone as a derailment product. No activity with p-hydroxybenzoyl-CoA, CoA-linked cinnamic acids or acetyl-CoA. The protein is 3,5-dihydroxybiphenyl synthase (BIS1) of Sorbus aucuparia (European mountain ash).